The primary structure comprises 233 residues: MTDDATQRRRLEAGLAQIGLALAPAQIDTLFAYLALLRKWNGVYNLTAIRHPDEMLTHHMLDSLAAVPALAEAARAAEVGTPARGRVLDVGSGGGMPGLPLAIACPDVSVLMVDIVQKKTAFLTQCRAQLGLSNAAAHWGPVEKLDDASGFAVITSRAFAELTDFVNLSGQLLAPHGKLIAMKGVYPQAELDRMEAAGLMAQWQVDAVPRITVPGLDAERHLVVLSRRASAHA.

S-adenosyl-L-methionine is bound by residues glycine 91, methionine 96, 142–143 (VE), and arginine 157.

The protein belongs to the methyltransferase superfamily. RNA methyltransferase RsmG family.

It localises to the cytoplasm. It catalyses the reaction guanosine(527) in 16S rRNA + S-adenosyl-L-methionine = N(7)-methylguanosine(527) in 16S rRNA + S-adenosyl-L-homocysteine. Functionally, specifically methylates the N7 position of guanine in position 527 of 16S rRNA. This chain is Ribosomal RNA small subunit methyltransferase G, found in Cupriavidus necator (strain ATCC 17699 / DSM 428 / KCTC 22496 / NCIMB 10442 / H16 / Stanier 337) (Ralstonia eutropha).